A 355-amino-acid chain; its full sequence is Guanine nucleotide-binding protein G(i) subunit alpha (355 aa).

Gly2 carries the N-myristoyl glycine lipid modification. Cys3 is lipidated: S-palmitoyl cysteine. The G-alpha domain maps to 33–355 (REVKLLLLGA…KNNLKDCGLF (323 aa)). The segment at 36-49 (KLLLLGAGESGKST) is G1 motif. Residues 41–48 (GAGESGKS), 176–182 (LRTRVKT), 201–205 (DVGGQ), 270–273 (NKKD), and Ala327 each bind GTP. The Mg(2+) site is built by Ser48 and Thr182. The tract at residues 174 to 182 (DVLRTRVKT) is G2 motif. A G3 motif region spans residues 197-206 (FKLFDVGGQR). Positions 266–273 (ILFLNKKD) are G4 motif. The interval 325-330 (TCATDT) is G5 motif.

Belongs to the G-alpha family. G(i/o/t/z) subfamily. G proteins are composed of 3 units; alpha, beta and gamma. The alpha chain contains the guanine nucleotide binding site.

In terms of biological role, guanine nucleotide-binding proteins (G proteins) are involved as modulators or transducers in various transmembrane signaling systems. The sequence is that of Guanine nucleotide-binding protein G(i) subunit alpha from Homarus americanus (American lobster).